Consider the following 252-residue polypeptide: Segregation and condensation protein A (252 aa).

Positions 117–136 (EREEERQNAFTKPPSDLSEF) are disordered.

It belongs to the ScpA family. As to quaternary structure, component of a cohesin-like complex composed of ScpA, ScpB and the Smc homodimer, in which ScpA and ScpB bind to the head domain of Smc. The presence of the three proteins is required for the association of the complex with DNA.

It is found in the cytoplasm. Functionally, participates in chromosomal partition during cell division. May act via the formation of a condensin-like complex containing Smc and ScpB that pull DNA away from mid-cell into both cell halves. The protein is Segregation and condensation protein A of Bacillus pumilus (strain SAFR-032).